Here is a 1387-residue protein sequence, read N- to C-terminus: DNA-directed RNA polymerase subunit beta' (1387 aa).

C70, C72, C85, and C88 together coordinate Zn(2+). Mg(2+) contacts are provided by D461, D463, and D465. Positions 808, 882, 889, and 892 each coordinate Zn(2+). The segment at 1367–1387 (QDEAKGVGQETPRLSGQEAAE) is disordered.

This sequence belongs to the RNA polymerase beta' chain family. As to quaternary structure, the RNAP catalytic core consists of 2 alpha, 1 beta, 1 beta' and 1 omega subunit. When a sigma factor is associated with the core the holoenzyme is formed, which can initiate transcription. The cofactor is Mg(2+). Zn(2+) is required as a cofactor.

The enzyme catalyses RNA(n) + a ribonucleoside 5'-triphosphate = RNA(n+1) + diphosphate. In terms of biological role, DNA-dependent RNA polymerase catalyzes the transcription of DNA into RNA using the four ribonucleoside triphosphates as substrates. This chain is DNA-directed RNA polymerase subunit beta', found in Granulibacter bethesdensis (strain ATCC BAA-1260 / CGDNIH1).